A 576-amino-acid chain; its full sequence is A-type ATP synthase subunit A (576 aa).

228–235 is a binding site for ATP; sequence GGFGTGKT.

The protein belongs to the ATPase alpha/beta chains family. In terms of assembly, has multiple subunits with at least A(3), B(3), C, D, E, F, H, I and proteolipid K(x).

The protein resides in the cell membrane. It carries out the reaction ATP + H2O + 4 H(+)(in) = ADP + phosphate + 5 H(+)(out). Its function is as follows. Component of the A-type ATP synthase that produces ATP from ADP in the presence of a proton gradient across the membrane. The A chain is the catalytic subunit. This is A-type ATP synthase subunit A from Methanothrix thermoacetophila (strain DSM 6194 / JCM 14653 / NBRC 101360 / PT) (Methanosaeta thermophila).